An 827-amino-acid polypeptide reads, in one-letter code: Ribosome biogenesis protein ERB1 (827 aa).

Positions 1–129 (MVHSKKDKSV…DFSDDNDTRP (129 aa)) are disordered. Positions 7 to 18 (DKSVMKHSDIKK) are enriched in basic and acidic residues. A compositionally biased stretch (acidic residues) spans 45–60 (CDSDDDEEFQSAEEEV). A compositionally biased stretch (low complexity) spans 61–77 (LSSGSESSSKEGSTPGS). 2 stretches are compositionally biased toward acidic residues: residues 81-99 (GSDE…DEDA) and 108-124 (EEGD…FSDD). A required for interaction with NOP7 region spans residues 291-409 (RFVPSKHEAK…LRKVPGYGES (119 aa)). The tract at residues 409 to 445 (SVRERFERSLDLYLAPRVRKNKLNIDPESLIPELPSP) is required for interaction with YTM1. WD repeat units lie at residues 461 to 500 (GHKG…EVYK), 509 to 549 (NQDD…FEVE), 657 to 695 (KSKG…LVKK), 698 to 737 (PGAR…TPYK), 741 to 780 (YHEK…DMMK), and 796 to 827 (VNSL…LWTT).

Belongs to the WD repeat BOP1/ERB1 family. Component of the NOP7 complex, composed of ERB1, NOP7 and YTM1. The complex is held together by ERB1, which interacts with NOP7 via its N-terminal domain and with YTM1 via a high-affinity interaction between the seven-bladed beta-propeller domains of the 2 proteins. The NOP7 complex associates with the 66S pre-ribosome.

The protein resides in the nucleus. The protein localises to the nucleolus. Its subcellular location is the nucleoplasm. Functionally, component of the NOP7 complex, which is required for maturation of the 25S and 5.8S ribosomal RNAs and formation of the 60S ribosome. In Eremothecium gossypii (strain ATCC 10895 / CBS 109.51 / FGSC 9923 / NRRL Y-1056) (Yeast), this protein is Ribosome biogenesis protein ERB1.